Here is a 1320-residue protein sequence, read N- to C-terminus: CAP-Gly domain-containing linker protein 1 (1320 aa).

The disordered stretch occupies residues 1–53 (MSMLKPSGLKAPTKILKPGSTALKTPAAAAAPLEKTVPSEKASGPPSSETQEE). Residues 21 to 35 (TALKTPAAAAAPLEK) are compositionally biased toward low complexity. Serine 48 carries the phosphoserine modification. At threonine 50 the chain carries Phosphothreonine. Residues 78–120 (GETQFAPGQWAGIVLDEPIGKNDGSVAGVRYFQCEPLKGIFTR) enclose the CAP-Gly 1 domain. An important for tubulin binding region spans residues 97–101 (GKNDG). Serine 146 carries the phosphoserine modification. Polar residues predominate over residues 156-171 (VSSSPATPSNIPQKPS). Positions 156 to 181 (VSSSPATPSNIPQKPSQPVAKETSAT) are disordered. Residue threonine 181 is modified to Phosphothreonine. A phosphoserine mark is found at serine 194, serine 196, serine 199, and serine 203. A CAP-Gly 2 domain is found at 231-273 (GETDFAKGEWCGVELDEPLGKNDGAVAGTRYFQCQPKYGLFAP). Residues 301 to 331 (TTPASLKRSPSASSLSSMSSVASSVSSKPSR) show a composition bias toward low complexity. Residues 301–338 (TTPASLKRSPSASSLSSMSSVASSVSSKPSRTGLLTET) are disordered. Serine 309 is subject to Phosphoserine. Position 311 is a phosphoserine; by PKA (serine 311). Serine 314 and serine 347 each carry phosphoserine. The segment at 1089–1109 (SLPSNTLRESEYRKDADEEKA) is disordered. Basic and acidic residues predominate over residues 1096–1109 (RESEYRKDADEEKA). Serine 1116 is subject to Phosphoserine. The segment at 1178-1201 (KRQLSSSSGNTDVQTEEDERAQES) is disordered. Residues 1180 to 1190 (QLSSSSGNTDV) show a composition bias toward polar residues. Serine 1246 is subject to Phosphoserine. The CCHC-type zinc-finger motif lies at 1299–1316 (PYCEICEMFGHWATNCND).

In terms of assembly, interacts with MTOR; phosphorylates and regulates CLIP1. Interacts (via CAP-Gly domains) with tubulin and TUBA1B. Interacts with SLAIN2. Interacts with MAPRE1 and MAPRE3. Interacts (via zinc finger) with DCTN1. Binds preferentially to tyrosinated microtubules, and only marginally to detyrosinated microtubules. Post-translationally, phosphorylated. Phosphorylation induces conformational changes by increasing the affinity of the N-terminus for C-terminus, resulting in inhibition of its function thus decreasing its binding to microtubules and DCTN1. Exhibits a folded, autoinhibited conformation when phosphorylated and an open conformation when dephosphorylated with increased binding affinity to microtubules and DCTN1. Phosphorylation regulates its recruitment to tyrosinated microtubules and the recruitment of vesicular cargo to microtubules in neurons. Phosphorylation by MTOR may positively regulate CLIP1 association with microtubules.

It is found in the cytoplasm. Its subcellular location is the cytoskeleton. It localises to the cytoplasmic vesicle membrane. The protein resides in the cell projection. The protein localises to the ruffle. Functionally, binds to the plus end of microtubules and regulates the dynamics of the microtubule cytoskeleton. Promotes microtubule growth and microtubule bundling. Links cytoplasmic vesicles to microtubules and thereby plays an important role in intracellular vesicle trafficking. Plays a role macropinocytosis and endosome trafficking. The sequence is that of CAP-Gly domain-containing linker protein 1 (Clip1) from Rattus norvegicus (Rat).